The primary structure comprises 148 residues: Hemoglobin subunit beta (148 aa).

A Globin domain is found at 3–148; sequence XWTDXERAAI…VVSALGRQYH (146 aa). Histidine 64 and histidine 93 together coordinate heme b.

It belongs to the globin family. Heterotetramer of two alpha chains and two beta chains. As to expression, red blood cells.

Involved in oxygen transport from gills to the various peripheral tissues. This Decapterus maruadsi (Japanese scad) protein is Hemoglobin subunit beta (hbb).